Consider the following 573-residue polypeptide: Glucocorticoid modulatory element-binding protein 1 (573 aa).

Ala-2 carries the post-translational modification N-acetylalanine. Residues 82-166 (TGTIEANEDM…RKMMDSGQID (85 aa)) enclose the SAND domain. A Zn(2+)-binding site is contributed by Cys-113. DNA contacts are provided by Lys-139, Lys-143, Lys-146, and Arg-157. Positions 170, 174, and 178 each coordinate Zn(2+). The stretch at 321–367 (LDNRRNQVEQGEEQFLYTLTDLERQLEEQKKQGQDHRLKSQTVQNVV) forms a coiled coil. The disordered stretch occupies residues 370–398 (PVSTPKPPKRPRLQRPASTTVLSPSPPVQ).

As to quaternary structure, homodimer, and heterodimer of GMEB1 and GMEB2. GMEB1 and GMEB2 form the parvovirus initiator complex (PIF). Interacts with the glucocorticoid receptor (NR3C1) and NCOA2/TIF2. May interact with HSP27 and CREB-binding protein (CBP).

It localises to the nucleus. The protein resides in the cytoplasm. Functionally, trans-acting factor that binds to glucocorticoid modulatory elements (GME) present in the TAT (tyrosine aminotransferase) promoter and increases sensitivity to low concentrations of glucocorticoids. Also binds to the transferrin receptor promoter. Essential auxiliary factor for the replication of parvoviruses. The chain is Glucocorticoid modulatory element-binding protein 1 (GMEB1) from Homo sapiens (Human).